We begin with the raw amino-acid sequence, 338 residues long: CRISPR system Cmr subunit Cmr1-1 (338 aa).

The protein belongs to the CRISPR system Cmr1 family. As to quaternary structure, part of the type III-B Cmr ribonucleoprotein (RNP) complex, an elongated RNP with Cmr2 and Cmr3 as the base, with Cmr4 and Cmr5 forming a helical core along the mature crRNA (39 or 45 nt in length), while the complex is capped by Cmr6 and Cmr1. The 5' end of the crRNA is bound to Cmr2 and Cmr3, while Cmr6 and a Cmr1 subunit (Cmr1-1 or Cmr1-2) cap the 3' end of the crRNA. The target RNA lies antiparallel to the crRNA, with its 5' end near Cmr1 and Cmr6 and its 3' end near Cmr2 and Cmr3; major target cleavage occurs nears the junction of Cmr1/Cmr6 and Cmr4/Cmr, with minor cleavage occurring at 6 nt intervals which coincide with the proposed spacing of Cmr4 subunits.

The protein localises to the cytoplasm. Functionally, CRISPR (clustered regularly interspaced short palindromic repeat), is an adaptive immune system that provides protection against mobile genetic elements (viruses, transposable elements and conjugative plasmids). CRISPR clusters contain sequences complementary to antecedent mobile elements and target invading nucleic acids. CRISPR clusters are transcribed and processed into CRISPR RNA (crRNA), formerly called psiRNA (prokaryotic silencing) in this organism. Part of the Cmr ribonucleoprotein complex which has divalent cation-dependent endoribonuclease activity specific for ssRNA complementary to the crRNA (target RNA), generating 5' hydroxy- and 3' phosphate or 2'-3' cyclic phosphate termini. Cmr4 is probably the subunit that cleaves target RNA. Cmr complex does not cleave ssDNA complementary to the crRNA. Cleavage of invading RNA is guided by the crRNA; substrate cleavage occurs a fixed distance (14 nt) from the 3' end of the crRNA. In vitro reconstitution shows Cmr1-2 and Cmr5 are not absolutely necessary for target cleavage. The protein is CRISPR system Cmr subunit Cmr1-1 of Pyrococcus furiosus (strain ATCC 43587 / DSM 3638 / JCM 8422 / Vc1).